Consider the following 424-residue polypeptide: Enolase (424 aa).

A (2R)-2-phosphoglycerate-binding site is contributed by Gln-165. Residue Glu-207 is the Proton donor of the active site. The Mg(2+) site is built by Asp-244, Glu-283, and Asp-310. (2R)-2-phosphoglycerate is bound by residues Lys-335, Arg-364, Ser-365, and Lys-386. Lys-335 functions as the Proton acceptor in the catalytic mechanism.

Belongs to the enolase family. Requires Mg(2+) as cofactor.

The protein localises to the cytoplasm. It localises to the secreted. It is found in the cell surface. The enzyme catalyses (2R)-2-phosphoglycerate = phosphoenolpyruvate + H2O. It functions in the pathway carbohydrate degradation; glycolysis; pyruvate from D-glyceraldehyde 3-phosphate: step 4/5. In terms of biological role, catalyzes the reversible conversion of 2-phosphoglycerate (2-PG) into phosphoenolpyruvate (PEP). It is essential for the degradation of carbohydrates via glycolysis. In Chlamydia trachomatis serovar D (strain ATCC VR-885 / DSM 19411 / UW-3/Cx), this protein is Enolase.